The following is a 404-amino-acid chain: Deoxyguanosinetriphosphate triphosphohydrolase-like protein (404 aa).

The HD domain occupies 69-217 (RLTHSLEVAQ…AGIADDIAYD (149 aa)).

The protein belongs to the dGTPase family. Type 2 subfamily.

The protein is Deoxyguanosinetriphosphate triphosphohydrolase-like protein of Rhodopseudomonas palustris (strain BisB18).